The sequence spans 490 residues: Glutathione reductase (490 aa).

Residues Ser19 and Gly20 each contribute to the FAD site. Ser19 contacts glutathione. Arg26 lines the glutathione pocket. The FAD site is built by Glu39, Thr48, Cys49, and Lys57. A disulfide bridge links Cys49 with Cys54. Tyr110 is a binding site for glutathione. Position 126 (Ala126) interacts with FAD. Positions 208, 211, 214, 231, and 237 each coordinate NADP(+). Residue Ser246 coordinates glutathione. Gly297 contacts NADP(+). FAD is bound at residue Asp337. NADP(+) is bound at residue Glu343. Position 345 (Thr345) interacts with FAD. Arg353 serves as a coordination point for glutathione. Val379 lines the NADP(+) pocket. Residue Lys432 participates in glutathione binding. His479 provides a ligand contact to FAD. His479 serves as the catalytic Proton acceptor.

It belongs to the class-I pyridine nucleotide-disulfide oxidoreductase family. In terms of assembly, homodimer. Requires FAD as cofactor.

It localises to the cytoplasm. The protein localises to the mitochondrion. The enzyme catalyses 2 glutathione + NADP(+) = glutathione disulfide + NADPH + H(+). Its function is as follows. Catalyzes the reduction of glutathione disulfide (GSSG) to reduced glutathione (GSH). Constitutes the major mechanism to maintain a high GSH:GSSG ratio in the cytosol. In Debaryomyces hansenii (strain ATCC 36239 / CBS 767 / BCRC 21394 / JCM 1990 / NBRC 0083 / IGC 2968) (Yeast), this protein is Glutathione reductase (GLR1).